The primary structure comprises 564 residues: MRQSLTLIPTLREVPADAEAKSHKLLLRAGFIRQNTSGVYSYMPLAYRVIQNIQKIVREEMEKINAVEMLMPALQQAETWQESGRWYTYGPELMRLKDRHGREFALGATHEEVITSLVRDEVKSYKRLPLTLYQIQSKFRDEKRPRFGLLRGREFIMKDAYSFHASEESLEETYQNMYGAYSSIFARCELNVRPVIADSGAMGGKDTHEFMALSEIGEDTIAYSDGSSYAANTEMAEVVMNSEPSDETPEALEKIDTPNVKSIEELASFLQIEPSACIKSMLFKADDRFVLVLVRGDHEVNDVKVKNLLNAEVVELASHEEVAEKLGTEPGFAGPIGAAGDIEIYADQAVKVMVNAVSGANEKDRHYRNVNIERDASVKAYADLRIIQEGDPSPDGKGTIRFAEGIEVGQVFKLGTRYSEAMNATYLDENGRAQPMLMGCYGIGVSRTLSAIAEQHHDEKGLIWPKSVAPYDLHILALNMKNEAQKELAEQLYGKFQAEGYEVLYDDRAERAGVKFADSDLIGLPIRITVGKRADEGIVEVKIRKTGESAEVSVDELSEFIKTK.

The protein belongs to the class-II aminoacyl-tRNA synthetase family. ProS type 1 subfamily. Homodimer.

The protein localises to the cytoplasm. The catalysed reaction is tRNA(Pro) + L-proline + ATP = L-prolyl-tRNA(Pro) + AMP + diphosphate. Catalyzes the attachment of proline to tRNA(Pro) in a two-step reaction: proline is first activated by ATP to form Pro-AMP and then transferred to the acceptor end of tRNA(Pro). As ProRS can inadvertently accommodate and process non-cognate amino acids such as alanine and cysteine, to avoid such errors it has two additional distinct editing activities against alanine. One activity is designated as 'pretransfer' editing and involves the tRNA(Pro)-independent hydrolysis of activated Ala-AMP. The other activity is designated 'posttransfer' editing and involves deacylation of mischarged Ala-tRNA(Pro). The misacylated Cys-tRNA(Pro) is not edited by ProRS. In Bacillus velezensis (strain DSM 23117 / BGSC 10A6 / LMG 26770 / FZB42) (Bacillus amyloliquefaciens subsp. plantarum), this protein is Proline--tRNA ligase.